The chain runs to 160 residues: Twist-related protein 2 (160 aa).

The tract at residues 1–63 (MEEGSSSPVS…GSPSAQSFEE (63 aa)) is disordered. The span at 27–37 (KRFGRKRRYSK) shows a compositional bias: basic residues. Positions 66–117 (SQRILANVRERQRTQSLNEAFAALRKIIPTLPSDKLSKIQTLKLAARYIDFL) constitute a bHLH domain.

Efficient DNA binding requires dimerization with another bHLH protein. Forms a heterodimer with TCF3/E12. Also interacts with MEF2C. In terms of tissue distribution, expressed at low levels in sclerotome and dermatome of somites, and in limb buds at 10.5 dpc. Accumulates predominantly in dermatome, prevertebrae and derivatives of branchial arches by 13 dpc. Also expressed near surface of embryo and in chondrogenic cells. In adult, expressed at low levels in skin, bladder, uterus, aorta and heart.

It localises to the nucleus. Its subcellular location is the cytoplasm. Its function is as follows. Binds to the E-box consensus sequence 5'-CANNTG-3' as a heterodimer and inhibits transcriptional activation by MYOD1, MYOG, MEF2A and MEF2C. Also represses expression of pro-inflammatory cytokines such as TNFA and IL1B. Involved in postnatal glycogen storage and energy metabolism. Inhibits the premature or ectopic differentiation of preosteoblast cells during osteogenesis, possibly by changing the internal signal transduction response of osteoblasts to external growth factors. In Mus musculus (Mouse), this protein is Twist-related protein 2 (Twist2).